Here is a 411-residue protein sequence, read N- to C-terminus: Keratin, type I cytoskeletal 12 (411 aa).

Residues D1–S42 are head. The coil 1A stretch occupies residues E43–W78. The 317-residue stretch at E43–D359 folds into the IF rod domain. The tract at residues G83–L101 is linker 1. A coil 1B region spans residues I102 to C193. A linker 12 region spans residues R194–L216. The interval L217–G354 is coil 2. The tract at residues E355 to N411 is tail. The interval A356–R387 is disordered. Polar residues predominate over residues S365 to D378.

Belongs to the intermediate filament family. In terms of assembly, heterotetramer of two type I and two type II keratins. Keratin-3 associates with keratin-12. In terms of tissue distribution, cornea specific. Associated mainly with all layers of the central corneal epithelium and also found in the suprabasal limbal epithelium.

Involved in corneal epithelium organization, integrity and corneal keratin expression. This Oryctolagus cuniculus (Rabbit) protein is Keratin, type I cytoskeletal 12 (KRT12).